A 261-amino-acid chain; its full sequence is Thiamine thiazole synthase (261 aa).

NAD(+) contacts are provided by residues Ala33, 52–53 (ER), Gly60, Val124, and 152–154 (HVD). The Fe cation site is built by Asp154 and His169. Residue Met219 coordinates NAD(+). Arg229 is a binding site for glycine.

This sequence belongs to the THI4 family. In terms of assembly, homooctamer; tetramer of dimers. It depends on Fe(2+) as a cofactor.

It catalyses the reaction hydrogen sulfide + glycine + NAD(+) = ADP-5-ethyl-4-methylthiazole-2-carboxylate + nicotinamide + 3 H2O + H(+). It participates in cofactor biosynthesis; thiamine diphosphate biosynthesis. In terms of biological role, involved in the biosynthesis of the thiazole moiety of thiamine. Catalyzes the conversion of NAD and glycine to adenosine diphosphate 5-(2-hydroxyethyl)-4-methylthiazole-2-carboxylate (ADT), an adenylated thiazole intermediate, using free sulfide as a source of sulfur. The chain is Thiamine thiazole synthase from Pyrobaculum islandicum (strain DSM 4184 / JCM 9189 / GEO3).